The chain runs to 349 residues: 2-oxoglutarate-Fe(II) type oxidoreductase ppzD (349 aa).

The Fe2OG dioxygenase domain maps to 200–311 (NTSELRLNHY…RYSVAYFGKP (112 aa)). 3 residues coordinate Fe cation: H227, D229, and H287. Residue R302 participates in 2-oxoglutarate binding.

This sequence belongs to the iron/ascorbate-dependent oxidoreductase family. It depends on Fe(2+) as a cofactor.

It catalyses the reaction L-proline + 2-oxoglutarate + O2 = trans-4-hydroxy-L-proline + succinate + CO2. The enzyme catalyses L-proline + 2-oxoglutarate + O2 = trans-3-hydroxy-L-proline + succinate + CO2. The catalysed reaction is D-proline + 2-oxoglutarate + O2 = cis-4-hydroxy-D-proline + succinate + CO2. Its pathway is secondary metabolite biosynthesis. In terms of biological role, 2-oxoglutarate-Fe(II) type oxidoreductase; part of the gene cluster that mediates the biosynthesis of pyrrolopyrazines, secondary metabolites showing insecticidal activity. Within the pathway, ppzD converts L-proline into trans-4-hydroxy-L-proline as a major product, yielding a key precursor for peramine biosynthesis. PpzD is also able to convert L-proline into trans-3-hydroxy-L-proline. The single multifunctional NRPS ppzA is sufficient to produce peramine via condensation of 1-pyrroline-5-carboxylate and arginine, N-methylation of the alpha-amino group of arginine and reduction of the thioester and the cyclization to form an iminium ion resulting in release from the peptide synthetase. Deprotonation of this intermediate and oxidation of the pyrroline ring would give rise to peramine. In Epichloe species that produce only peramine, the peramine synthetase gene is not localized in a gene cluster, in contrast to Metarhizium species that contain additional pyrrolopyrazine biosynthesis genes. The 2-oxoglutarate-Fe(II) type oxidoreductase ppzC hydroxylates peramine to yield the newly identified compound 8-hydroxyperamine whereas ppzD converts L-proline into trans-4-hydroxy-L-proline, a precursor of peramine biosynthesis. The sequence is that of 2-oxoglutarate-Fe(II) type oxidoreductase ppzD (ppzD) from Metarhizium majus (strain ARSEF 297).